Consider the following 195-residue polypeptide: HTH-type transcriptional regulator BetI (195 aa).

The HTH tetR-type domain maps to 8 to 68; sequence PIRRQQLIEA…ATMRYLISHL (61 aa). The H-T-H motif DNA-binding region spans 31-50; sequence SIVQIARRAGVSNGIISHYF.

It functions in the pathway amine and polyamine biosynthesis; betaine biosynthesis via choline pathway [regulation]. Functionally, repressor involved in the biosynthesis of the osmoprotectant glycine betaine. It represses transcription of the choline transporter BetT and the genes of BetAB involved in the synthesis of glycine betaine. The chain is HTH-type transcriptional regulator BetI from Pectobacterium atrosepticum (strain SCRI 1043 / ATCC BAA-672) (Erwinia carotovora subsp. atroseptica).